A 588-amino-acid polypeptide reads, in one-letter code: uncharacterized protein (588 aa).

This is an uncharacterized protein from Schizosaccharomyces pombe (strain 972 / ATCC 24843) (Fission yeast).